Reading from the N-terminus, the 192-residue chain is MEVSGESHSGPSCSSSSRDGSGVSVSKELLMAGSGGRGGIWDRLFINSKPNSRKNSTLQTVRIERSPLLDQVRTFLPQMAQANEKLRKEMAAAPPGHFNIENTDETLGQVIQMDVALFEMNQSHSKEEDSSEENSQDSSEESSESEDEDDSTSSEGEVTIDNIKLPHSEDGKGKIEVLDSPASENKEKQENK.

A compositionally biased stretch (low complexity) spans 1 to 26 (MEVSGESHSGPSCSSSSRDGSGVSVS). A disordered region spans residues 1–39 (MEVSGESHSGPSCSSSSRDGSGVSVSKELLMAGSGGRGG). S34 and S66 each carry phosphoserine. Residues 118 to 192 (FEMNQSHSKE…SENKEKQENK (75 aa)) are disordered. Acidic residues predominate over residues 129–152 (DSSEENSQDSSEESSESEDEDDST). Basic and acidic residues predominate over residues 164-177 (KLPHSEDGKGKIEV). At S180 the chain carries Phosphoserine.

As to quaternary structure, interacts with NOP58, RUVBL1 and RUVBL2; the interactions are direct and NOPCHAP1 bridges the association of NOP58 with RUVBL1:RUVBL2 even in absence of snoRNAs. The interactions with RUVBL1 and RUVBL2 are disrupted upon ATP binding.

It localises to the nucleus. In terms of biological role, client-loading PAQosome/R2TP complex cofactor that selects NOP58 to promote box C/D small nucleolar ribonucleoprotein (snoRNP) assembly. Acts as a bridge between NOP58 and the R2TP complex via RUVBL1:RUVBL2. This is NOP protein chaperone 1 (NOPCHAP1) from Bos taurus (Bovine).